We begin with the raw amino-acid sequence, 559 residues long: Peptidyl-prolyl isomerase cwc27 (559 aa).

Residues 11–184 (PTASATLHTT…YPVKVVSCEV (174 aa)) form the PPIase cyclophilin-type domain. Disordered stretches follow at residues 201–395 (ATAP…GFSS), 413–449 (ESAD…EDEE), and 518–559 (PRER…REKP). Basic and acidic residues predominate over residues 261-273 (APKKTSPEAEQQT). Positions 305 to 319 (LPDPESPARSPPQSP) are enriched in pro residues. 2 stretches are compositionally biased toward polar residues: residues 384 to 394 (GSSTNGVTGFS) and 425 to 442 (TSIS…AKSN).

This sequence belongs to the cyclophilin-type PPIase family. CWC27 subfamily. As to quaternary structure, associated with the spliceosome.

The protein localises to the cytoplasm. Its subcellular location is the nucleus. The catalysed reaction is [protein]-peptidylproline (omega=180) = [protein]-peptidylproline (omega=0). Functionally, PPIases accelerate the folding of proteins. It catalyzes the cis-trans isomerization of proline imidic peptide bonds in oligopeptides. Involved in pre-mRNA splicing. The sequence is that of Peptidyl-prolyl isomerase cwc27 (cwc27) from Aspergillus fumigatus (strain ATCC MYA-4609 / CBS 101355 / FGSC A1100 / Af293) (Neosartorya fumigata).